The chain runs to 365 residues: Peptide chain release factor 2 (365 aa).

Residue Gln252 is modified to N5-methylglutamine.

This sequence belongs to the prokaryotic/mitochondrial release factor family. Methylated by PrmC. Methylation increases the termination efficiency of RF2.

It localises to the cytoplasm. Functionally, peptide chain release factor 2 directs the termination of translation in response to the peptide chain termination codons UGA and UAA. This chain is Peptide chain release factor 2, found in Aeromonas salmonicida (strain A449).